Consider the following 79-residue polypeptide: Protein SNA2 (79 aa).

The Cytoplasmic portion of the chain corresponds to 1-6 (MHARDW). A helical membrane pass occupies residues 7-27 (FLVFIAIFIPPLAVWLKRGFF). Residues 28 to 32 (TKDLL) lie on the Vesicular side of the membrane. A helical membrane pass occupies residues 33 to 53 (INFLLFLLGFFPGLIHALYVI). Topologically, residues 54–79 (SCHPYEENEARYSHLSSSDDNYGSLA) are cytoplasmic. Residues Ser71 and Ser77 each carry the phosphoserine modification.

The protein belongs to the UPF0057 (PMP3) family.

Its subcellular location is the membrane. The protein resides in the lipid droplet. The protein is Protein SNA2 (SNA2) of Saccharomyces cerevisiae (strain ATCC 204508 / S288c) (Baker's yeast).